Consider the following 1174-residue polypeptide: Male determiner protein Mdmd(III) (1174 aa).

Residues 1–15 (MNATDAESRKPENKP) show a composition bias toward basic and acidic residues. Disordered regions lie at residues 1-51 (MNAT…SGQR), 80-109 (KDGS…HPVE), and 136-259 (KQLS…LRRS). The segment covering 16-35 (SSESSSSGSTSGSSDGEVSS) has biased composition (low complexity). Over residues 36–47 (KTYFKNNKSKVL) the composition is skewed to polar residues. Basic and acidic residues predominate over residues 80-92 (KDGSNEMLPKEDS). Residues 93–102 (INTNHNYTTD) are compositionally biased toward polar residues. The segment covering 138 to 153 (LSAYRSRSRSTRLSYS) has biased composition (low complexity). Residues 167 to 180 (SRYKKSVLRNRRTS) are compositionally biased toward basic residues. Residues 183–200 (HGRDSSTTKRSVSRDKDN) show a composition bias toward basic and acidic residues. The segment covering 201-223 (RLRRRIGSSRSHTRSHSRFRRSE) has biased composition (basic residues). The span at 235–259 (RSQERRHERRRSMSSDYERIALRRS) shows a compositional bias: basic and acidic residues. The MIF4G domain occupies 348–531 (KKYIHGYINK…KVLFQVRRDG (184 aa)). Positions 641–757 (ALRRTIYLTL…SWDVLDCIKL (117 aa)) constitute an MI domain. Residues 840 to 857 (SAPSSSSSSSLSSELSAP) are compositionally biased toward low complexity. Disordered regions lie at residues 840 to 1045 (SAPS…SRTK) and 1096 to 1133 (KDNY…NHSR). A compositionally biased stretch (basic residues) spans 869–909 (KKKHKGKNKKMTKKKNPSKKKEKTKKFVGKNKIAAKNKTIK). Positions 910-924 (RRTDKDNSSSKDNFL) are enriched in basic and acidic residues. The span at 926–957 (SESSSNESISLDSLSSELFAPSSYSSSESSND) shows a compositional bias: low complexity. Residues 963-1001 (KHKGKNKKMTKKKNPSNKKEKTKKKLSKNKKAPNKNTKK) are compositionally biased toward basic residues. Residues 1010–1020 (SSESSISESKS) are compositionally biased toward low complexity. The span at 1034-1045 (RKKRVTSKSRTK) shows a compositional bias: basic residues. The span at 1103 to 1118 (QNHEISQRHDSEIKRR) shows a compositional bias: basic and acidic residues. A compositionally biased stretch (basic residues) spans 1119–1130 (REERKKRHHEKN).

This sequence belongs to the CWC22 family. In terms of assembly, component of the spliceosome C complex.

Its subcellular location is the nucleus speckle. In terms of biological role, male determiner protein (M-factor) that controls male somatic sexual differentiation. Acts as a dominant factor that regulates the mRNA splicing of transformer (tra) and doublesex (dsx) transcripts and promotes expression of male splice forms of tra and dsx. Probably acts as a component of the spliceosome C complex required for mRNA splicing factor and exon-junction complex (EJC) assembly. Hinders eIF4AIII from non-specifically binding RNA and escorts it to the splicing machinery to promote EJC assembly on mature mRNAs. The polypeptide is Male determiner protein Mdmd(III) (Musca domestica (House fly)).